Reading from the N-terminus, the 781-residue chain is Acyl-CoA dehydrogenase family member 11 (781 aa).

Position 177 is an N6-acetyllysine (Lys177). Residue Tyr325 is modified to Phosphotyrosine. N6-succinyllysine is present on Lys392. Residues 505–515, 513–515, 539–541, and Ser541 each bind FAD; these read FCMTEPDVASS, ASS, and WSS. Ser515 contributes to the substrate binding site. 630 to 633 contributes to the substrate binding site; it reads GPGR. FAD-binding positions include Arg658, Gln728, and 728–732; that span reads QVCGG. Substrate is bound at residue Gly756. FAD-binding positions include 757–759 and Glu759; that span reads PDE.

The protein belongs to the acyl-CoA dehydrogenase family. Homodimer. FAD is required as a cofactor.

It is found in the peroxisome. Its subcellular location is the mitochondrion membrane. It carries out the reaction a 2,3-saturated acyl-CoA + oxidized [electron-transfer flavoprotein] + H(+) = a (2E)-enoyl-CoA + reduced [electron-transfer flavoprotein]. The catalysed reaction is docosanoyl-CoA + oxidized [electron-transfer flavoprotein] + H(+) = (2E)-docosenoyl-CoA + reduced [electron-transfer flavoprotein]. The enzyme catalyses tetracosanoyl-CoA + oxidized [electron-transfer flavoprotein] + H(+) = (2E)-tetracosenoyl-CoA + reduced [electron-transfer flavoprotein]. It catalyses the reaction eicosanoyl-CoA + oxidized [electron-transfer flavoprotein] + H(+) = (2E)-eicosenoyl-CoA + reduced [electron-transfer flavoprotein]. It carries out the reaction hexacosanoyl-CoA + oxidized [electron-transfer flavoprotein] + H(+) = (2E)-hexacosenoyl-CoA + reduced [electron-transfer flavoprotein]. The catalysed reaction is tricosanoyl-CoA + oxidized [electron-transfer flavoprotein] + H(+) = (2E)-tricosenoyl-CoA + reduced [electron-transfer flavoprotein]. It participates in lipid metabolism; fatty acid beta-oxidation. Functionally, acyl-CoA dehydrogenase, that exhibits maximal activity towards saturated C22-CoA. Probably participates in beta-oxydation and energy production but could also play a role in the metabolism of specific fatty acids to control fatty acids composition of cellular lipids in brain. The polypeptide is Acyl-CoA dehydrogenase family member 11 (ACAD11) (Pongo abelii (Sumatran orangutan)).